A 346-amino-acid polypeptide reads, in one-letter code: Proto-oncogene serine/threonine-protein kinase mos (346 aa).

The Protein kinase domain occupies 60–341 (VCLLQRLGAG…RPLLVDLTSL (282 aa)). Residues 66-74 (LGAGGFGSV) and Lys-87 contribute to the ATP site. Residue Asp-201 is the Proton acceptor of the active site.

The protein belongs to the protein kinase superfamily. Ser/Thr protein kinase family.

The enzyme catalyses L-seryl-[protein] + ATP = O-phospho-L-seryl-[protein] + ADP + H(+). It catalyses the reaction L-threonyl-[protein] + ATP = O-phospho-L-threonyl-[protein] + ADP + H(+). In Chlorocebus aethiops (Green monkey), this protein is Proto-oncogene serine/threonine-protein kinase mos.